A 293-amino-acid chain; its full sequence is Pyridoxal 5'-phosphate synthase subunit PdxS (293 aa).

D23 provides a ligand contact to D-ribose 5-phosphate. The Schiff-base intermediate with D-ribose 5-phosphate role is filled by K80. G152 contributes to the D-ribose 5-phosphate binding site. Residue R164 participates in D-glyceraldehyde 3-phosphate binding. Residues G213 and 234-235 (GS) contribute to the D-ribose 5-phosphate site.

Belongs to the PdxS/SNZ family. As to quaternary structure, in the presence of PdxT, forms a dodecamer of heterodimers.

The enzyme catalyses aldehydo-D-ribose 5-phosphate + D-glyceraldehyde 3-phosphate + L-glutamine = pyridoxal 5'-phosphate + L-glutamate + phosphate + 3 H2O + H(+). The protein operates within cofactor biosynthesis; pyridoxal 5'-phosphate biosynthesis. Catalyzes the formation of pyridoxal 5'-phosphate from ribose 5-phosphate (RBP), glyceraldehyde 3-phosphate (G3P) and ammonia. The ammonia is provided by the PdxT subunit. Can also use ribulose 5-phosphate and dihydroxyacetone phosphate as substrates, resulting from enzyme-catalyzed isomerization of RBP and G3P, respectively. This chain is Pyridoxal 5'-phosphate synthase subunit PdxS, found in Thermus thermophilus (strain ATCC BAA-163 / DSM 7039 / HB27).